The sequence spans 490 residues: Cobyric acid synthase (490 aa).

Positions 250–432 (QLEIVVIRLP…LHGLLDNHAW (183 aa)) constitute a GATase cobBQ-type domain. Catalysis depends on Cys328, which acts as the Nucleophile. Residue His424 is part of the active site.

This sequence belongs to the CobB/CobQ family. CobQ subfamily.

The protein operates within cofactor biosynthesis; adenosylcobalamin biosynthesis. Functionally, catalyzes amidations at positions B, D, E, and G on adenosylcobyrinic A,C-diamide. NH(2) groups are provided by glutamine, and one molecule of ATP is hydrogenolyzed for each amidation. The polypeptide is Cobyric acid synthase (Gloeobacter violaceus (strain ATCC 29082 / PCC 7421)).